The chain runs to 244 residues: Thiol S-methyltransferase TMT1B (244 aa).

An N-terminal signal peptide occupies residues M1–A23.

Belongs to the methyltransferase superfamily. Highly expressed in liver and kidney. No expression in testis, heart, lung, brain, spleen or cultured fibroblasts.

It localises to the endoplasmic reticulum membrane. The protein localises to the lipid droplet. Its subcellular location is the microsome. It is found in the cytoplasm. The protein resides in the cytosol. It catalyses the reaction a thiol + S-adenosyl-L-methionine = a methyl thioether + S-adenosyl-L-homocysteine + H(+). Its function is as follows. Thiol S-methyltransferase that catalyzes the transfer of a methyl group from S-adenosyl-L-methionine to alkyl and phenolic thiol-containing acceptor substrates. Together with TMT1B accounts for most of S-thiol methylation activity in the endoplasmic reticulum of hepatocytes. Selectively methylates S-centered nucleophiles from metabolites such as hydrogen sulfide and dithiothreitol. This is Thiol S-methyltransferase TMT1B (Tmt1b) from Rattus norvegicus (Rat).